The chain runs to 237 residues: Zinc finger protein 22 (237 aa).

A disordered region spans residues 1–33 (MRLGKPKGGISRSASQGKTYESKRKTARQRQKW). An N6-acetyllysine mark is found at Lys-18 and Lys-23. C2H2-type zinc fingers lie at residues 55–82 (YKCT…GKKS), 83–110 (HKCA…GEKP), 111–138 (YKCD…GEKP), 139–166 (YCCD…GEKP), and 167–194 (YQCE…EKKS). A compositionally biased stretch (basic residues) spans 188–217 (VHKEKKSHKRGKNARAKTHPVSWKRGKGRK). The disordered stretch occupies residues 188–218 (VHKEKKSHKRGKNARAKTHPVSWKRGKGRKA).

The protein belongs to the krueppel C2H2-type zinc-finger protein family. In terms of tissue distribution, highly expressed in the ameloblast layer of mandibular incisors, moderately expressed in submandibular gland, calvaria, kidney and lung, and expressed at low levels in brain and thymus.

The protein resides in the nucleus. Its function is as follows. Binds DNA through the consensus sequence 5'-CAATG-3'. May be involved in transcriptional regulation and may play a role in tooth formation. This is Zinc finger protein 22 (Znf22) from Rattus norvegicus (Rat).